The chain runs to 287 residues: Phospholipid phosphatase 2 (287 aa).

Topologically, residues Met-1–Arg-4 are cytoplasmic. The chain crosses the membrane as a helical span at residues Trp-5 to Leu-25. At Thr-26–Thr-51 the chain is on the lumenal side. The helical transmembrane segment at Ile-52–Gly-72 threads the bilayer. Residues Glu-73 to Asp-87 are Cytoplasmic-facing. A helical transmembrane segment spans residues Phe-88 to Val-108. At Ser-109–Leu-161 the chain is on the lumenal side. The phosphatase sequence motif I stretch occupies residues Lys-117 to Pro-125. N-linked (GlcNAc...) asparagine glycosylation is found at Asn-139 and Asn-155. A helical membrane pass occupies residues Ser-162–Val-182. Positions Tyr-164–His-167 are phosphatase sequence motif II. His-167 functions as the Proton donors in the catalytic mechanism. Residues Gln-183 to Leu-193 are Cytoplasmic-facing. A helical membrane pass occupies residues Leu-194–Tyr-211. Over Thr-212–Lys-218 the chain is Lumenal. Residues Thr-212–Asp-223 form a phosphatase sequence motif III region. Residue His-219 is the Nucleophile of the active site. A helical transmembrane segment spans residues His-219 to Val-239. Over Arg-240–Ser-287 the chain is Cytoplasmic.

This sequence belongs to the PA-phosphatase related phosphoesterase family. In terms of assembly, forms functional homodimers and homooligomers. Can also form heterooligomers with PLPP1 and PLPP3. N-glycosylated.

The protein localises to the membrane. It localises to the cell membrane. The protein resides in the early endosome membrane. Its subcellular location is the endoplasmic reticulum membrane. The enzyme catalyses a 1,2-diacyl-sn-glycero-3-phosphate + H2O = a 1,2-diacyl-sn-glycerol + phosphate. It catalyses the reaction 1,2-dihexadecanoyl-sn-glycero-3-phosphate + H2O = 1,2-dihexadecanoyl-sn-glycerol + phosphate. The catalysed reaction is 1,2-di-(9Z-octadecenoyl)-sn-glycero-3-phosphate + H2O = 1,2-di-(9Z-octadecenoyl)-sn-glycerol + phosphate. It carries out the reaction a monoacyl-sn-glycero-3-phosphate + H2O = a monoacylglycerol + phosphate. The enzyme catalyses (9Z)-octadecenoyl-sn-glycero-3-phosphate + H2O = (9Z-octadecenoyl)-glycerol + phosphate. It catalyses the reaction sphing-4-enine 1-phosphate + H2O = sphing-4-enine + phosphate. The catalysed reaction is an N-acylsphing-4-enine 1-phosphate + H2O = an N-acylsphing-4-enine + phosphate. It carries out the reaction N-(octanoyl)-sphing-4-enine-1-phosphate + H2O = N-octanoylsphing-4-enine + phosphate. The enzyme catalyses N-(9Z-octadecenoyl)-ethanolamine phosphate + H2O = N-(9Z-octadecenoyl) ethanolamine + phosphate. It participates in lipid metabolism; phospholipid metabolism. Magnesium-independent phospholipid phosphatase. Insensitive to N-ethylmaleimide. Magnesium-independent phospholipid phosphatase that catalyzes the dephosphorylation of a variety of glycerolipid and sphingolipid phosphate esters including phosphatidate/PA, lysophosphatidate/LPA, sphingosine 1-phosphate/S1P and ceramide 1-phosphate/C1P. Has no apparent extracellular phosphatase activity and therefore most probably acts intracellularly. Also acts on N-oleoyl ethanolamine phosphate/N-(9Z-octadecenoyl)-ethanolamine phosphate, a potential physiological compound. Through dephosphorylation of these bioactive lipid mediators produces new bioactive compounds and may regulate signal transduction in different cellular processes. Indirectly regulates, for instance, cell cycle G1/S phase transition through its phospholipid phosphatase activity. The polypeptide is Phospholipid phosphatase 2 (Bos taurus (Bovine)).